The primary structure comprises 138 residues: AGPQLDVSCFAHDKNIGSRTEQLSVVHVASAQDCMKECQALPTCSHFTYNKNSKKCHLKAGAPEFYTYTGDMTGPRSCEHNCSDACWMDGNNPLAVWDYSGQPPALCWAACMGTPGCDLYTFQGMTCKLYSQTSSKRA.

2 consecutive PAN domains span residues 9 to 78 and 82 to 138; these read CFAH…PRSC and CSDA…SKRA. 6 disulfides stabilise this stretch: Cys-9-Cys-78, Cys-34-Cys-56, Cys-38-Cys-44, Cys-82-Cys-86, Cys-107-Cys-127, and Cys-111-Cys-117. Ser-18 contacts a carbohydrate. The a carbohydrate site is built by Lys-59, Tyr-66, and Asp-71.

As to quaternary structure, homodimer or heterodimer. In terms of processing, contains six disulfide bonds.

It is found in the cytoplasmic vesicle. It localises to the secretory vesicle. Its subcellular location is the microneme. Functionally, galactose-binding lectin. Plays a role in adhesion to the host cell. Has a potential role in invasion of host cells. The protein is Microneme antigen L2 of Sarcocystis muris.